The chain runs to 484 residues: Glycogen synthase (484 aa).

Lys-20 provides a ligand contact to ADP-alpha-D-glucose.

Belongs to the glycosyltransferase 1 family. Bacterial/plant glycogen synthase subfamily.

The catalysed reaction is [(1-&gt;4)-alpha-D-glucosyl](n) + ADP-alpha-D-glucose = [(1-&gt;4)-alpha-D-glucosyl](n+1) + ADP + H(+). Its pathway is glycan biosynthesis; glycogen biosynthesis. Its function is as follows. Synthesizes alpha-1,4-glucan chains using ADP-glucose. The polypeptide is Glycogen synthase (Vibrio atlanticus (strain LGP32) (Vibrio splendidus (strain Mel32))).